The chain runs to 339 residues: RNA 3'-terminal phosphate cyclase (339 aa).

ATP contacts are provided by residues Asp-109 and 286–290 (HLADQ). His-310 (tele-AMP-histidine intermediate) is an active-site residue.

Belongs to the RNA 3'-terminal cyclase family. Type 1 subfamily.

The protein localises to the cytoplasm. The catalysed reaction is a 3'-end 3'-phospho-ribonucleotide-RNA + ATP = a 3'-end 2',3'-cyclophospho-ribonucleotide-RNA + AMP + diphosphate. Functionally, catalyzes the conversion of 3'-phosphate to a 2',3'-cyclic phosphodiester at the end of RNA. The mechanism of action of the enzyme occurs in 3 steps: (A) adenylation of the enzyme by ATP; (B) transfer of adenylate to an RNA-N3'P to produce RNA-N3'PP5'A; (C) and attack of the adjacent 2'-hydroxyl on the 3'-phosphorus in the diester linkage to produce the cyclic end product. The biological role of this enzyme is unknown but it is likely to function in some aspects of cellular RNA processing. This Halobacterium salinarum (strain ATCC 29341 / DSM 671 / R1) protein is RNA 3'-terminal phosphate cyclase.